Here is a 145-residue protein sequence, read N- to C-terminus: Large ribosomal subunit protein uL15 (145 aa).

Residues 20-39 (GRVGKHRKHPSGRGNAGGEH) are disordered.

This sequence belongs to the universal ribosomal protein uL15 family.

The sequence is that of Large ribosomal subunit protein uL15 (RPL27A) from Trypanosoma brucei brucei.